The sequence spans 802 residues: Lon protease (802 aa).

Positions 17–209 (LPILPLNNVV…QVLSFLERER (193 aa)) constitute a Lon N-terminal domain. Residue 363 to 370 (GPPGVGKT) participates in ATP binding. Positions 599–780 (EDEVGVVTGL…DEVLPRVLHP (182 aa)) constitute a Lon proteolytic domain. Catalysis depends on residues Ser-686 and Lys-729.

It belongs to the peptidase S16 family. As to quaternary structure, homohexamer. Organized in a ring with a central cavity.

It localises to the cytoplasm. The catalysed reaction is Hydrolysis of proteins in presence of ATP.. Its function is as follows. ATP-dependent serine protease that mediates the selective degradation of mutant and abnormal proteins as well as certain short-lived regulatory proteins. Required for cellular homeostasis and for survival from DNA damage and developmental changes induced by stress. Degrades polypeptides processively to yield small peptide fragments that are 5 to 10 amino acids long. Binds to DNA in a double-stranded, site-specific manner. This chain is Lon protease, found in Roseiflexus castenholzii (strain DSM 13941 / HLO8).